The following is a 120-amino-acid chain: UPF0231 protein YacL (120 aa).

This sequence belongs to the UPF0231 family.

The sequence is that of UPF0231 protein YacL (yacL) from Shigella flexneri.